Consider the following 860-residue polypeptide: Translation initiation factor IF-2 (860 aa).

Residues 1–11 (MSDTKSGDDKT) are compositionally biased toward basic and acidic residues. Residues 1–265 (MSDTKSGDDK…MRRRQEKFKR (265 aa)) form a disordered region. A compositionally biased stretch (low complexity) spans 79–88 (AAPVVQEAPK). Residues 110 to 183 (SRSEMEARRR…RRRAEEEARR (74 aa)) show a composition bias toward basic and acidic residues. One can recognise a tr-type G domain in the interval 358–525 (PRPPVVTIMG…AILLQAEILD (168 aa)). Residues 367–374 (GHVDHGKT) are G1. Position 367–374 (367–374 (GHVDHGKT)) interacts with GTP. The tract at residues 392 to 396 (GITQH) is G2. The G3 stretch occupies residues 413–416 (DTPG). GTP-binding positions include 413–417 (DTPGH) and 467–470 (NKID). The tract at residues 467 to 470 (NKID) is G4. The interval 503 to 505 (SAT) is G5.

The protein belongs to the TRAFAC class translation factor GTPase superfamily. Classic translation factor GTPase family. IF-2 subfamily.

It is found in the cytoplasm. In terms of biological role, one of the essential components for the initiation of protein synthesis. Protects formylmethionyl-tRNA from spontaneous hydrolysis and promotes its binding to the 30S ribosomal subunits. Also involved in the hydrolysis of GTP during the formation of the 70S ribosomal complex. This chain is Translation initiation factor IF-2, found in Mesorhizobium japonicum (strain LMG 29417 / CECT 9101 / MAFF 303099) (Mesorhizobium loti (strain MAFF 303099)).